A 657-amino-acid polypeptide reads, in one-letter code: Glycogen debranching enzyme (657 aa).

Catalysis depends on Asp336, which acts as the Nucleophile. Glu371 (proton donor) is an active-site residue. Residues 458–467 (NEANGEENRD) are compositionally biased toward basic and acidic residues. A disordered region spans residues 458 to 479 (NEANGEENRDGTNNNYSNNHGK).

It belongs to the glycosyl hydrolase 13 family.

The enzyme catalyses Hydrolysis of (1-&gt;6)-alpha-D-glucosidic linkages to branches with degrees of polymerization of three or four glucose residues in limit dextrin.. It participates in glycan degradation; glycogen degradation. Removes maltotriose and maltotetraose chains that are attached by 1,6-alpha-linkage to the limit dextrin main chain, generating a debranched limit dextrin. The protein is Glycogen debranching enzyme of Escherichia coli O8 (strain IAI1).